A 197-amino-acid polypeptide reads, in one-letter code: Protocatechuate 3,4-dioxygenase alpha chain (197 aa).

Arg-130 contributes to the 3,4-dihydroxybenzoate binding site.

Belongs to the intradiol ring-cleavage dioxygenase family. In terms of assembly, the enzyme is an oligomer of 12 copies of the alpha and beta chains. Fe(3+) serves as cofactor.

The enzyme catalyses 3,4-dihydroxybenzoate + O2 = 3-carboxy-cis,cis-muconate + 2 H(+). The protein operates within aromatic compound metabolism; beta-ketoadipate pathway; 3-carboxy-cis,cis-muconate from 3,4-dihydroxybenzoate: step 1/1. Its function is as follows. Plays an essential role in the utilization of numerous aromatic and hydroaromatic compounds via the beta-ketoadipate pathway. The polypeptide is Protocatechuate 3,4-dioxygenase alpha chain (pcaG) (Burkholderia cepacia (Pseudomonas cepacia)).